The sequence spans 943 residues: Isoleucine--tRNA ligase (943 aa).

The 'HIGH' region motif lies at 59–69 (PYANGRIHLGH). Position 577 (Glu577) interacts with L-isoleucyl-5'-AMP. The 'KMSKS' region motif lies at 618–622 (KMSKS). Residue Lys621 participates in ATP binding. Residues Cys906, Cys909, Cys926, and Cys929 each contribute to the Zn(2+) site.

This sequence belongs to the class-I aminoacyl-tRNA synthetase family. IleS type 1 subfamily. Monomer. It depends on Zn(2+) as a cofactor.

The protein localises to the cytoplasm. The enzyme catalyses tRNA(Ile) + L-isoleucine + ATP = L-isoleucyl-tRNA(Ile) + AMP + diphosphate. Its function is as follows. Catalyzes the attachment of isoleucine to tRNA(Ile). As IleRS can inadvertently accommodate and process structurally similar amino acids such as valine, to avoid such errors it has two additional distinct tRNA(Ile)-dependent editing activities. One activity is designated as 'pretransfer' editing and involves the hydrolysis of activated Val-AMP. The other activity is designated 'posttransfer' editing and involves deacylation of mischarged Val-tRNA(Ile). In Stenotrophomonas maltophilia (strain K279a), this protein is Isoleucine--tRNA ligase.